Consider the following 211-residue polypeptide: Interleukin-6 (211 aa).

The signal sequence occupies residues 1-24 (MKFLSARDFHPVAFLGLMLVTTTA). Disulfide bonds link C70/C76 and C99/C109.

It belongs to the IL-6 superfamily. In terms of assembly, component of a hexamer of two molecules each of IL6, IL6R and IL6ST; first binds to IL6R to associate with the signaling subunit IL6ST. Interacts with IL6R (via the N-terminal ectodomain); this interaction may be affected by IL6R-binding with SORL1, hence decreasing IL6 cis signaling. Interacts with SORL1 (via the N-terminal ectodomain); this interaction leads to IL6 internalization and lysosomal degradation. May form a trimeric complex with the soluble SORL1 ectodomain and soluble IL6R receptor; this interaction might stabilize circulating IL6, hence promoting IL6 trans signaling. N- and O-glycosylated. As to expression, expressed by dendritic cells and macrophages. Expressed by activated follicular B cells. Abundantly expressed in the central nervous system (CNS), particularly the hypothalamic region.

The protein localises to the secreted. Cytokine with a wide variety of biological functions in immunity, tissue regeneration, and metabolism. Binds to IL6R, then the complex associates to the signaling subunit IL6ST/gp130 to trigger the intracellular IL6-signaling pathway. The interaction with the membrane-bound IL6R and IL6ST stimulates 'classic signaling', whereas the binding of IL6 and soluble IL6R to IL6ST stimulates 'trans-signaling'. Alternatively, 'cluster signaling' occurs when membrane-bound IL6:IL6R complexes on transmitter cells activate IL6ST receptors on neighboring receiver cells. In terms of biological role, IL6 is a potent inducer of the acute phase response. Rapid production of IL6 contributes to host defense during infection and tissue injury, but excessive IL6 synthesis is involved in disease pathology. In the innate immune response, is synthesized by myeloid cells, such as macrophages and dendritic cells, upon recognition of pathogens through toll-like receptors (TLRs) at the site of infection or tissue injury. In the adaptive immune response, is required for the differentiation of B-cells into immunoglolin-secreting cells. Plays a major role in the differentiation of CD4(+) T cell subsets. Essential factor for the development of T follicular helper (Tfh) cells that are required for the induction of germinal-center formation. Together with IL21, controls the early generation of Tfh cells and are critical for an effective antibody response to acute viral infection. Required to drive naive CD4(+) T cells to the Th17 lineage, through 'cluster signaling' by dendritic cells. Also required for proliferation of myeloma cells and the survival of plasmablast cells. Its function is as follows. Acts as an essential factor in bone homeostasis and on vessels directly or indirectly by induction of VEGF, resulting in increased angiogenesis activity and vascular permeability. Induces, through 'trans-signaling' and synergistically with IL1B and TNF, the production of VEGF. Involved in metabolic controls, is discharged into the bloodstream after muscle contraction increasing lipolysis and improving insulin resistance. 'Trans-signaling' in central nervous system regulates energy and glucose homeostasis. Mediates, through GLP-1, crosstalk between insulin-sensitive tissues, intestinal L cells and pancreatic islets to adapt to changes in insulin demand. Also acts as a myokine. Plays a protective role during liver injury, being required for maintenance of tissue regeneration. Also has a pivotal role in iron metabolism by regulating HAMP/hepcidin expression upon inflammation or bacterial infection. Through activation of IL6ST-YAP-NOTCH pathway, induces inflammation-induced epithelial regeneration. The protein is Interleukin-6 of Mus musculus (Mouse).